A 434-amino-acid chain; its full sequence is Sensor histidine kinase Hik2 (434 aa).

The 137-residue stretch at 16–152 folds into the GAF domain; that stretch reads ISLCQSQVRL…EAIAKSLAVA (137 aa). Cysteine 19 contributes to the [3Fe-4S] cluster binding site. The Histidine kinase domain maps to 182-432; that stretch reads DLLHQLRNPL…TFTLWLRSGE (251 aa). At histidine 185 the chain carries Phosphohistidine; by autocatalysis. The G1 box signature appears at 357-361; that stretch reads DTGYG. The G2 box motif lies at 386–390; the sequence is GTGLG.

It belongs to the chloroplast sensor kinase protein family. Exists as monomers, tetramers, hexamers and other higher-order oligomers; all are able to autophosphorylate. Upon treatment with 0.5 M NaCl only tetramers are seen, which are probably inactive. Interacts with both RppA and Rre1. [3Fe-4S] cluster is required as a cofactor. Post-translationally, autophosphorylates, probably on His-185.

It is found in the cytoplasm. The catalysed reaction is ATP + protein L-histidine = ADP + protein N-phospho-L-histidine.. Autophosphorylation is inhibited by Na(+) but not by Cl(-). Reducing agents dithionite, duroquinol and decyl-plastoquinone, but not NADPH or ferredoxin inhibit autophosphorylation. Oxidation of the Fe-S cluster (with potassium ferricyanide) induces a conformational change that is conducive to its autophosphorylation activity. Member of possibly 2 two-component regulatory system(s) Hik2/Rre1 and Hik2/RppA. Transduces PQ (plastoquinone) redox signals to photosystem gene expression machinery during the adjustment of photosystem stoichiometry. Reduced PQ suppresses its autophosphorylation activity (i.e. kinase activity is higher under oxidizing conditions). Member of two-component regulatory system Hik2/Rre1, controls expression of sigB (sll0306), sll0528, slr1119, slr0852 and ssr3188 in response to hyperosmotic stress. Activity responds to high salt (with a linear response as concentrations rise to 0.5 M NaCl); detects Cl(-) levels. Autophosphorylates and transfers phosphate to Rre1. May transfer phosphate to RppA in a possible Hik2/RppA two-component system. This is Sensor histidine kinase Hik2 from Synechocystis sp. (strain ATCC 27184 / PCC 6803 / Kazusa).